A 134-amino-acid polypeptide reads, in one-letter code: Lymphocyte antigen 6S (134 aa).

The first 26 residues, 1–26 (MSSLQAMKTLSLVLLVALLSMERAQG), serve as a signal peptide directing secretion. The 49-residue stretch at 28–76 (RCYRCLAVLEGASCSVVSCPFLDGVCVSQKVSVFGSKVRGENKLSLLSC) folds into the UPAR/Ly6 domain. 4 disulfides stabilise this stretch: C29–C53, C32–C41, C76–C98, and C99–C104. N105 is lipidated: GPI-anchor amidated asparagine. Positions 106–134 (AVVLAASSPWALCVQLLLSLGSVFLWALL) are cleaved as a propeptide — removed in mature form.

It localises to the cell membrane. The protein is Lymphocyte antigen 6S of Homo sapiens (Human).